The sequence spans 362 residues: Cobalt-precorrin-5B C(1)-methyltransferase (362 aa).

The protein belongs to the CbiD family.

It carries out the reaction Co-precorrin-5B + S-adenosyl-L-methionine = Co-precorrin-6A + S-adenosyl-L-homocysteine. It functions in the pathway cofactor biosynthesis; adenosylcobalamin biosynthesis; cob(II)yrinate a,c-diamide from sirohydrochlorin (anaerobic route): step 6/10. Functionally, catalyzes the methylation of C-1 in cobalt-precorrin-5B to form cobalt-precorrin-6A. This is Cobalt-precorrin-5B C(1)-methyltransferase from Burkholderia thailandensis (strain ATCC 700388 / DSM 13276 / CCUG 48851 / CIP 106301 / E264).